The sequence spans 481 residues: Abietadienol/abietadienal oxidase (481 aa).

A helical membrane pass occupies residues 2–22 (ADQISLLLVVFTAAVALLHLI). Cysteine 430 serves as a coordination point for heme.

This sequence belongs to the cytochrome P450 family. The cofactor is heme. As to expression, expressed in young tissues such as flushing buds and green bark tissues. Lower levels in mature needles and bark.

It localises to the membrane. The enzyme catalyses abieta-7,13-dien-18-ol + 2 reduced [NADPH--hemoprotein reductase] + 2 O2 = abieta-7,13-dien-18-oate + 2 oxidized [NADPH--hemoprotein reductase] + 3 H2O + 3 H(+). Multifunctional and multisubstrate cytochrome P450 that oxidizes the respective carbon 18 of abietadienol, abietadienal, levopimaradienol, isopimara-7,15-dienol, isopimara-7,15-dienal, dehydroabietadienol, and dehydroabietadienal. The protein is Abietadienol/abietadienal oxidase (CYP720B1) of Pinus taeda (Loblolly pine).